The chain runs to 182 residues: ATP-dependent protease subunit HslV (182 aa).

Residue Thr10 is part of the active site. The Na(+) site is built by Ala164, Cys167, and Thr170.

This sequence belongs to the peptidase T1B family. HslV subfamily. In terms of assembly, a double ring-shaped homohexamer of HslV is capped on each side by a ring-shaped HslU homohexamer. The assembly of the HslU/HslV complex is dependent on binding of ATP.

The protein resides in the cytoplasm. The enzyme catalyses ATP-dependent cleavage of peptide bonds with broad specificity.. Its activity is regulated as follows. Allosterically activated by HslU binding. In terms of biological role, protease subunit of a proteasome-like degradation complex believed to be a general protein degrading machinery. The protein is ATP-dependent protease subunit HslV of Chelativorans sp. (strain BNC1).